The chain runs to 121 residues: Protein SNORC (121 aa).

The N-terminal stretch at 1 to 24 is a signal peptide; it reads MASCLALRVALLLISGVLAPAVLT. Over 25 to 92 the chain is Extracellular; the sequence is AEGPQEPDPT…QDGGSLGPGA (68 aa). The tract at residues 26–84 is disordered; sequence EGPQEPDPTLWNEPIELPSGEGPLESTSHNQEFAVSGPPFPTSAPAPEDSTPPARVDQD. A helical transmembrane segment spans residues 93–113; the sequence is IAAIVIAALLATCVVLALVVV. The Cytoplasmic portion of the chain corresponds to 114–121; the sequence is ALRKFSAS.

In terms of assembly, interacts (via the extracellular domain) with FGF2. Expressed only in cartilage, including nasal, knee epiphyseal and rib tissues. In proliferation and hypertrophic chondrocytes, detected intracellulary and in the pericellular extracellular matrix. In primary spongiosa, detected only in the extracellular matrix.

It localises to the membrane. Its subcellular location is the cytoplasm. It is found in the secreted. The protein localises to the extracellular space. The protein resides in the extracellular matrix. Plays a role in the regulation of chondrocyte maturation and postnatal endochondral ossification. May inhibit cell growth stimulation induced by FGF2. The protein is Protein SNORC of Mus musculus (Mouse).